The following is a 741-amino-acid chain: NAD(P)H-quinone oxidoreductase subunit 5, chloroplastic (741 aa).

14 helical membrane passes run 9–29, 40–60, 89–109, 122–139, 147–167, 185–205, 219–239, 258–278, 280–300, 396–416, 425–445, 544–564, 603–623, and 719–739; these read WIIPFVPLPVTMSIGLGLLLV, WAFPSVSLLSIVMVFSADLSI, IDPLTSIMSILITTVGIMVLI, LRFFAYMSFSNTSMLGLV, IHIFWELVGMCSYLLIGFWFT, GDFGLLLGILGFYWITGSLEF, NGVNSLFATLCAFLLFVGAVA, TPISALIHAATMVAAGIFLVA, LLPIFTVIPYIMNLISLLGII, TTFLLGTLSLCGIPPLACFWS, WLYSPIFAIIACSTAGLTAFY, LFPLLVLVLFTLFVGSIGIPF, IYSVSISYFGIFIASLLYGSV, and YLFVYLSYVSTFLLIYYFYFL.

It belongs to the complex I subunit 5 family. As to quaternary structure, NDH is composed of at least 16 different subunits, 5 of which are encoded in the nucleus.

It is found in the plastid. Its subcellular location is the chloroplast thylakoid membrane. The catalysed reaction is a plastoquinone + NADH + (n+1) H(+)(in) = a plastoquinol + NAD(+) + n H(+)(out). It catalyses the reaction a plastoquinone + NADPH + (n+1) H(+)(in) = a plastoquinol + NADP(+) + n H(+)(out). Functionally, NDH shuttles electrons from NAD(P)H:plastoquinone, via FMN and iron-sulfur (Fe-S) centers, to quinones in the photosynthetic chain and possibly in a chloroplast respiratory chain. The immediate electron acceptor for the enzyme in this species is believed to be plastoquinone. Couples the redox reaction to proton translocation, and thus conserves the redox energy in a proton gradient. The sequence is that of NAD(P)H-quinone oxidoreductase subunit 5, chloroplastic (ndhF) from Liriodendron tulipifera (Tuliptree).